The following is a 260-amino-acid chain: tRNA (guanine-N(1)-)-methyltransferase (260 aa).

S-adenosyl-L-methionine is bound by residues G117 and 137–142; that span reads LGDFVL.

It belongs to the RNA methyltransferase TrmD family. Homodimer.

It is found in the cytoplasm. The enzyme catalyses guanosine(37) in tRNA + S-adenosyl-L-methionine = N(1)-methylguanosine(37) in tRNA + S-adenosyl-L-homocysteine + H(+). In terms of biological role, specifically methylates guanosine-37 in various tRNAs. In Cupriavidus metallidurans (strain ATCC 43123 / DSM 2839 / NBRC 102507 / CH34) (Ralstonia metallidurans), this protein is tRNA (guanine-N(1)-)-methyltransferase.